The following is a 436-amino-acid chain: UPF0597 protein YhaM (436 aa).

Belongs to the UPF0597 family.

This is UPF0597 protein YhaM from Escherichia coli O6:H1 (strain CFT073 / ATCC 700928 / UPEC).